Consider the following 154-residue polypeptide: Xanthine-guanine phosphoribosyltransferase (154 aa).

Residues 38–39 (RG), Lys71, and 90–98 (DDLVDTGGT) contribute to the 5-phospho-alpha-D-ribose 1-diphosphate site. Position 71 (Lys71) interacts with GMP. Residue Asp91 coordinates Mg(2+). Guanine is bound by residues Asp94 and Ile137. Xanthine-binding residues include Asp94 and Ile137. GMP contacts are provided by residues 94-98 (DTGGT) and 136-137 (WI).

It belongs to the purine/pyrimidine phosphoribosyltransferase family. XGPT subfamily. In terms of assembly, homotetramer. Mg(2+) is required as a cofactor.

It is found in the cell inner membrane. It catalyses the reaction GMP + diphosphate = guanine + 5-phospho-alpha-D-ribose 1-diphosphate. It carries out the reaction XMP + diphosphate = xanthine + 5-phospho-alpha-D-ribose 1-diphosphate. The catalysed reaction is IMP + diphosphate = hypoxanthine + 5-phospho-alpha-D-ribose 1-diphosphate. It functions in the pathway purine metabolism; GMP biosynthesis via salvage pathway; GMP from guanine: step 1/1. It participates in purine metabolism; XMP biosynthesis via salvage pathway; XMP from xanthine: step 1/1. Its function is as follows. Purine salvage pathway enzyme that catalyzes the transfer of the ribosyl-5-phosphate group from 5-phospho-alpha-D-ribose 1-diphosphate (PRPP) to the N9 position of the 6-oxopurines guanine and xanthine to form the corresponding ribonucleotides GMP (guanosine 5'-monophosphate) and XMP (xanthosine 5'-monophosphate), with the release of PPi. To a lesser extent, also acts on hypoxanthine. The protein is Xanthine-guanine phosphoribosyltransferase of Buchnera aphidicola subsp. Schizaphis graminum (strain Sg).